We begin with the raw amino-acid sequence, 223 residues long: Deoxyribose-phosphate aldolase (223 aa).

Asp89 (proton donor/acceptor) is an active-site residue. The active-site Schiff-base intermediate with acetaldehyde is Lys152. Residue Lys181 is the Proton donor/acceptor of the active site.

It belongs to the DeoC/FbaB aldolase family. DeoC type 1 subfamily.

It localises to the cytoplasm. The enzyme catalyses 2-deoxy-D-ribose 5-phosphate = D-glyceraldehyde 3-phosphate + acetaldehyde. The protein operates within carbohydrate degradation; 2-deoxy-D-ribose 1-phosphate degradation; D-glyceraldehyde 3-phosphate and acetaldehyde from 2-deoxy-alpha-D-ribose 1-phosphate: step 2/2. Catalyzes a reversible aldol reaction between acetaldehyde and D-glyceraldehyde 3-phosphate to generate 2-deoxy-D-ribose 5-phosphate. This Bacillus subtilis (strain 168) protein is Deoxyribose-phosphate aldolase.